Reading from the N-terminus, the 360-residue chain is MKNNHQKIIMHLDIDAFYATVSELLHPEYKNFPIAVGSLNSRTGIISSPNYLARSYGVKAAMPIFLAKELCPNLIILPSEHNIYQSYSKHFFQIINKYTNKIEITSIDECFIDATDLVKKYHNNIRLLATKIQKEIKNKLNLSISIGISYNKTIAKMATELNKPSGISIIDENKIINLIYELNINKIPYIGEIKSQELYAINIFKIKELIATENKQKISLVLGSIYQNLVNDLKGLSKIKIIDEDIYKTISHSKTFNEDLNDFYEISNEMNDLILTVTNRLKKCNLMTNNISIYIKYPSFKTKIKQKQLTYYTDDYQTIFLAIKNLFKIMYKDETIRLIGISLNKLVKKENVKKQLFLFD.

Residues 9-191 (IMHLDIDAFY…LNINKIPYIG (183 aa)) form the UmuC domain. The Mg(2+) site is built by D13 and D108. E109 is a catalytic residue.

The protein belongs to the DNA polymerase type-Y family. Monomer. Mg(2+) is required as a cofactor.

It localises to the cytoplasm. The enzyme catalyses DNA(n) + a 2'-deoxyribonucleoside 5'-triphosphate = DNA(n+1) + diphosphate. Functionally, poorly processive, error-prone DNA polymerase involved in untargeted mutagenesis. Copies undamaged DNA at stalled replication forks, which arise in vivo from mismatched or misaligned primer ends. These misaligned primers can be extended by PolIV. Exhibits no 3'-5' exonuclease (proofreading) activity. May be involved in translesional synthesis, in conjunction with the beta clamp from PolIII. This chain is DNA polymerase IV, found in Ureaplasma parvum serovar 3 (strain ATCC 27815 / 27 / NCTC 11736).